The following is a 153-amino-acid chain: Lipoprotein signal peptidase (153 aa).

2 helical membrane-spanning segments follow: residues 52-72 and 81-101; these read ILAG…IGIV and GQML…GNFI. Catalysis depends on residues aspartate 111 and aspartate 129. A helical membrane pass occupies residues 124–144; sequence IFNIADSSLCVGVILLFIHML.

This sequence belongs to the peptidase A8 family.

The protein resides in the cell membrane. The catalysed reaction is Release of signal peptides from bacterial membrane prolipoproteins. Hydrolyzes -Xaa-Yaa-Zaa-|-(S,diacylglyceryl)Cys-, in which Xaa is hydrophobic (preferably Leu), and Yaa (Ala or Ser) and Zaa (Gly or Ala) have small, neutral side chains.. The protein operates within protein modification; lipoprotein biosynthesis (signal peptide cleavage). This protein specifically catalyzes the removal of signal peptides from prolipoproteins. The sequence is that of Lipoprotein signal peptidase from Bacillus velezensis (strain DSM 23117 / BGSC 10A6 / LMG 26770 / FZB42) (Bacillus amyloliquefaciens subsp. plantarum).